The chain runs to 299 residues: tRNA uridine(34) hydroxylase (299 aa).

The Rhodanese domain occupies 132 to 226 (AGRPVVMLDT…YFEEVGGAHY (95 aa)). Catalysis depends on Cys186, which acts as the Cysteine persulfide intermediate.

Belongs to the TrhO family.

The catalysed reaction is uridine(34) in tRNA + AH2 + O2 = 5-hydroxyuridine(34) in tRNA + A + H2O. Its function is as follows. Catalyzes oxygen-dependent 5-hydroxyuridine (ho5U) modification at position 34 in tRNAs. This chain is tRNA uridine(34) hydroxylase, found in Burkholderia pseudomallei (strain 1106a).